We begin with the raw amino-acid sequence, 272 residues long: 2-dehydro-3-deoxyphosphooctonate aldolase (272 aa).

Belongs to the KdsA family.

The protein resides in the cytoplasm. It catalyses the reaction D-arabinose 5-phosphate + phosphoenolpyruvate + H2O = 3-deoxy-alpha-D-manno-2-octulosonate-8-phosphate + phosphate. It functions in the pathway carbohydrate biosynthesis; 3-deoxy-D-manno-octulosonate biosynthesis; 3-deoxy-D-manno-octulosonate from D-ribulose 5-phosphate: step 2/3. The protein operates within bacterial outer membrane biogenesis; lipopolysaccharide biosynthesis. The chain is 2-dehydro-3-deoxyphosphooctonate aldolase from Geotalea daltonii (strain DSM 22248 / JCM 15807 / FRC-32) (Geobacter daltonii).